A 68-amino-acid polypeptide reads, in one-letter code: uncharacterized protein (68 aa).

The disordered stretch occupies residues 1–27; sequence MNEFEKWIEGRYEPHEQKQKEHEDTMG.

This is an uncharacterized protein from Bacillus subtilis (strain 168).